A 279-amino-acid polypeptide reads, in one-letter code: Homeobox protein BarH-like 2 (279 aa).

2 disordered regions span residues 110–137 and 194–279; these read APGG…RRSR and KGGQ…PPLS. Residues 118-128 show a composition bias toward polar residues; the sequence is SSESETEQPTP. A DNA-binding region (homeobox) is located at residues 133-192; the sequence is PRRSRTIFTELQLMGLEKKFQKQKYLSTPDRLDLAQSLGLTQLQVKTWYQNRRMKWKKMV. Positions 225-240 are enriched in polar residues; the sequence is NSQAQGQEQLEPSQGQ. Pro residues predominate over residues 261–279; that stretch reads PPDPPQELPIPSSEPPPLS.

The protein belongs to the BAR homeobox family. As to expression, highly expressed in adult salivary gland and at much lower levels in mammary gland, kidney and placenta.

It localises to the nucleus. In terms of biological role, transcription factor. Binds optimally to the DNA consensus sequence 5'-YYTAATGRTTTTY-3'. May control the expression of neural adhesion molecules such as L1 or Ng-CAM during embryonic development of both the central and peripherical nervous system. May be involved in controlling adhesive processes in keratinizing epithelia. This is Homeobox protein BarH-like 2 (BARX2) from Homo sapiens (Human).